The chain runs to 260 residues: Ubiquinone/menaquinone biosynthesis C-methyltransferase UbiE (260 aa).

S-adenosyl-L-methionine is bound by residues Thr-83, Asp-104, and 132–133 (NA).

It belongs to the class I-like SAM-binding methyltransferase superfamily. MenG/UbiE family.

It carries out the reaction a 2-demethylmenaquinol + S-adenosyl-L-methionine = a menaquinol + S-adenosyl-L-homocysteine + H(+). The catalysed reaction is a 2-methoxy-6-(all-trans-polyprenyl)benzene-1,4-diol + S-adenosyl-L-methionine = a 5-methoxy-2-methyl-3-(all-trans-polyprenyl)benzene-1,4-diol + S-adenosyl-L-homocysteine + H(+). It functions in the pathway quinol/quinone metabolism; menaquinone biosynthesis; menaquinol from 1,4-dihydroxy-2-naphthoate: step 2/2. It participates in cofactor biosynthesis; ubiquinone biosynthesis. Methyltransferase required for the conversion of demethylmenaquinol (DMKH2) to menaquinol (MKH2) and the conversion of 2-polyprenyl-6-methoxy-1,4-benzoquinol (DDMQH2) to 2-polyprenyl-3-methyl-6-methoxy-1,4-benzoquinol (DMQH2). The polypeptide is Ubiquinone/menaquinone biosynthesis C-methyltransferase UbiE (Bartonella henselae (strain ATCC 49882 / DSM 28221 / CCUG 30454 / Houston 1) (Rochalimaea henselae)).